The primary structure comprises 304 residues: Non-specific ribonucleoside hydrolase RihC (304 aa).

His-233 is an active-site residue.

This sequence belongs to the IUNH family. RihC subfamily.

Hydrolyzes both purine and pyrimidine ribonucleosides with a broad-substrate specificity. This is Non-specific ribonucleoside hydrolase RihC from Escherichia coli (strain SMS-3-5 / SECEC).